We begin with the raw amino-acid sequence, 81 residues long: Putative truncated GMC-type inactive oxidoreductase R833 (81 aa).

It belongs to the GMC oxidoreductase family.

In Acanthamoeba polyphaga mimivirus (APMV), this protein is Putative truncated GMC-type inactive oxidoreductase R833.